An 874-amino-acid polypeptide reads, in one-letter code: Alanine--tRNA ligase (874 aa).

H564, H568, C665, and H669 together coordinate Zn(2+).

Belongs to the class-II aminoacyl-tRNA synthetase family. Requires Zn(2+) as cofactor.

It is found in the cytoplasm. The catalysed reaction is tRNA(Ala) + L-alanine + ATP = L-alanyl-tRNA(Ala) + AMP + diphosphate. Catalyzes the attachment of alanine to tRNA(Ala) in a two-step reaction: alanine is first activated by ATP to form Ala-AMP and then transferred to the acceptor end of tRNA(Ala). Also edits incorrectly charged Ser-tRNA(Ala) and Gly-tRNA(Ala) via its editing domain. The sequence is that of Alanine--tRNA ligase from Burkholderia pseudomallei (strain 668).